We begin with the raw amino-acid sequence, 366 residues long: Quinolinate synthase (366 aa).

Iminosuccinate-binding residues include histidine 44 and serine 61. Residue cysteine 108 coordinates [4Fe-4S] cluster. Iminosuccinate-binding positions include 139–141 and serine 160; that span reads YVN. Cysteine 228 contacts [4Fe-4S] cluster. Iminosuccinate is bound by residues 254 to 256 and threonine 271; that span reads HPE. Cysteine 318 contributes to the [4Fe-4S] cluster binding site.

Belongs to the quinolinate synthase family. Type 3 subfamily. It depends on [4Fe-4S] cluster as a cofactor.

It is found in the cytoplasm. The enzyme catalyses iminosuccinate + dihydroxyacetone phosphate = quinolinate + phosphate + 2 H2O + H(+). It participates in cofactor biosynthesis; NAD(+) biosynthesis; quinolinate from iminoaspartate: step 1/1. In terms of biological role, catalyzes the condensation of iminoaspartate with dihydroxyacetone phosphate to form quinolinate. The chain is Quinolinate synthase from Staphylococcus carnosus (strain TM300).